The following is an 847-amino-acid chain: Glucans biosynthesis glucosyltransferase H (847 aa).

Topologically, residues 1-138 (MNKTTEYIDA…KWRTVGTIRR (138 aa)) are cytoplasmic. A helical transmembrane segment spans residues 139-156 (YILLILTLAQTVVATWYM). The Periplasmic segment spans residues 157 to 193 (KTILPYQGWALINPMDMVGQDIWVSFMQLLPYMLQTG). The helical transmembrane segment at 194–216 (ILILFAVLFCWVSAGFWTALMGF) threads the bilayer. Topologically, residues 217–511 (LQLLIGRDKY…LVKGMHPVHR (295 aa)) are cytoplasmic. A helical transmembrane segment spans residues 512–534 (AVFLTGVMSYLSAPLWFMFLALS). The Periplasmic segment spans residues 535 to 567 (TALQVVHALTEPQYFLQPRQLFPVWPQWRPELA). Residues 568–590 (IALFASTMVLLFLPKLLSIMLIW) traverse the membrane as a helical segment. The Cytoplasmic segment spans residues 591-602 (CKGTKEYGGFWR). The chain crosses the membrane as a helical span at residues 603–625 (VTLSLLLEVLFSVLLAPVRMLFH). Residues 626 to 679 (TVFVVSAFLGWEVVWNSPQRDDDSTPWGEAFMRHGSQLLLGLVWAVGMAWLDLR) are Periplasmic-facing. Residues 680 to 702 (FLFWLAPIVFSLILSPFVSVISS) form a helical membrane-spanning segment. Topologically, residues 703-847 (RSTVGLRTKR…ALQGRTSSAG (145 aa)) are cytoplasmic.

It belongs to the glycosyltransferase 2 family. OpgH subfamily.

It localises to the cell inner membrane. The protein operates within glycan metabolism; osmoregulated periplasmic glucan (OPG) biosynthesis. Functionally, involved in the biosynthesis of osmoregulated periplasmic glucans (OPGs). This chain is Glucans biosynthesis glucosyltransferase H, found in Salmonella typhi.